Here is a 140-residue protein sequence, read N- to C-terminus: Endoribonuclease YbeY (140 aa).

Zn(2+) is bound by residues H101, H105, and H111.

Belongs to the endoribonuclease YbeY family. Zn(2+) serves as cofactor.

Its subcellular location is the cytoplasm. Single strand-specific metallo-endoribonuclease involved in late-stage 70S ribosome quality control and in maturation of the 3' terminus of the 16S rRNA. The protein is Endoribonuclease YbeY of Aliarcobacter butzleri (strain RM4018) (Arcobacter butzleri).